Consider the following 239-residue polypeptide: Small ribosomal subunit protein eS1 (239 aa).

The segment at 1 to 24 (MAIQPPGSYPQGNKKGKAKKKSGQ) is disordered.

The protein belongs to the eukaryotic ribosomal protein eS1 family. As to quaternary structure, component of the small ribosomal subunit. Mature ribosomes consist of a small (40S) and a large (60S) subunit. The 40S subunit contains about 33 different proteins and 1 molecule of RNA (18S). The 60S subunit contains about 49 different proteins and 3 molecules of RNA (25S, 5.8S and 5S).

The protein resides in the cytoplasm. The chain is Small ribosomal subunit protein eS1 from Encephalitozoon cuniculi (strain GB-M1) (Microsporidian parasite).